Reading from the N-terminus, the 209-residue chain is Large ribosomal subunit protein bL25 (209 aa).

Belongs to the bacterial ribosomal protein bL25 family. CTC subfamily. Part of the 50S ribosomal subunit; part of the 5S rRNA/L5/L18/L25 subcomplex. Contacts the 5S rRNA. Binds to the 5S rRNA independently of L5 and L18.

Its function is as follows. This is one of the proteins that binds to the 5S RNA in the ribosome where it forms part of the central protuberance. The protein is Large ribosomal subunit protein bL25 of Xanthomonas campestris pv. campestris (strain B100).